We begin with the raw amino-acid sequence, 144 residues long: Large ribosomal subunit protein uL15 (144 aa).

A disordered region spans residues 1–48 (MIKLECLQDPSPRKRRTKLLGRGPSSGHGKTSGRGHKGDGSRSGYKRR).

Belongs to the universal ribosomal protein uL15 family. As to quaternary structure, part of the 50S ribosomal subunit.

Its function is as follows. Binds to the 23S rRNA. In Chlamydia trachomatis serovar L2 (strain ATCC VR-902B / DSM 19102 / 434/Bu), this protein is Large ribosomal subunit protein uL15.